A 256-amino-acid polypeptide reads, in one-letter code: Cell division protein ZapD (256 aa).

It belongs to the ZapD family. In terms of assembly, interacts with FtsZ.

It localises to the cytoplasm. Functionally, cell division factor that enhances FtsZ-ring assembly. Directly interacts with FtsZ and promotes bundling of FtsZ protofilaments, with a reduction in FtsZ GTPase activity. This Aromatoleum aromaticum (strain DSM 19018 / LMG 30748 / EbN1) (Azoarcus sp. (strain EbN1)) protein is Cell division protein ZapD.